The sequence spans 155 residues: 6,7-dimethyl-8-ribityllumazine synthase (155 aa).

5-amino-6-(D-ribitylamino)uracil contacts are provided by residues Phe22, 56–58, and 80–82; these read AFE and AVI. 85-86 is a (2S)-2-hydroxy-3-oxobutyl phosphate binding site; it reads ST. His88 (proton donor) is an active-site residue. Phe113 lines the 5-amino-6-(D-ribitylamino)uracil pocket. Arg127 provides a ligand contact to (2S)-2-hydroxy-3-oxobutyl phosphate.

It belongs to the DMRL synthase family.

It carries out the reaction (2S)-2-hydroxy-3-oxobutyl phosphate + 5-amino-6-(D-ribitylamino)uracil = 6,7-dimethyl-8-(1-D-ribityl)lumazine + phosphate + 2 H2O + H(+). It participates in cofactor biosynthesis; riboflavin biosynthesis; riboflavin from 2-hydroxy-3-oxobutyl phosphate and 5-amino-6-(D-ribitylamino)uracil: step 1/2. In terms of biological role, catalyzes the formation of 6,7-dimethyl-8-ribityllumazine by condensation of 5-amino-6-(D-ribitylamino)uracil with 3,4-dihydroxy-2-butanone 4-phosphate. This is the penultimate step in the biosynthesis of riboflavin. The sequence is that of 6,7-dimethyl-8-ribityllumazine synthase from Caldicellulosiruptor bescii (strain ATCC BAA-1888 / DSM 6725 / KCTC 15123 / Z-1320) (Anaerocellum thermophilum).